Consider the following 144-residue polypeptide: Catabolic 3-dehydroquinase 1 (144 aa).

The Proton acceptor role is filled by tyrosine 24. Substrate-binding residues include asparagine 75, histidine 81, and aspartate 88. The active-site Proton donor is the histidine 101. Substrate-binding positions include 102–103 (IS) and arginine 112.

The protein belongs to the type-II 3-dehydroquinase family. In terms of assembly, homododecamer. Adopts a ring-like structure, composed of an arrangement of two hexameric rings stacked on top of one another.

It catalyses the reaction 3-dehydroquinate = 3-dehydroshikimate + H2O. The protein operates within aromatic compound metabolism; 3,4-dihydroxybenzoate biosynthesis; 3,4-dihydroxybenzoate from 3-dehydroquinate: step 1/2. In terms of biological role, is involved in the catabolism of quinate. Allows the utilization of quinate as carbon source via the beta-ketoadipate pathway. This chain is Catabolic 3-dehydroquinase 1, found in Fusarium vanettenii (strain ATCC MYA-4622 / CBS 123669 / FGSC 9596 / NRRL 45880 / 77-13-4) (Fusarium solani subsp. pisi).